We begin with the raw amino-acid sequence, 231 residues long: Ubiquinone biosynthesis protein coq-4, mitochondrial (231 aa).

The Zn(2+) site is built by histidine 133, aspartate 134, histidine 137, and glutamate 149.

It belongs to the COQ4 family. As to quaternary structure, component of a multi-subunit COQ enzyme complex. Zn(2+) serves as cofactor.

The protein localises to the mitochondrion inner membrane. It carries out the reaction a 4-hydroxy-3-methoxy-5-(all-trans-polyprenyl)benzoate + H(+) = a 2-methoxy-6-(all-trans-polyprenyl)phenol + CO2. It functions in the pathway cofactor biosynthesis; ubiquinone biosynthesis. In terms of biological role, lyase that catalyzes the C1-decarboxylation of 4-hydroxy-3-methoxy-5-(all-trans-polyprenyl)benzoic acid into 2-methoxy-6-(all-trans-polyprenyl)phenol during ubiquinone biosynthesis. This Caenorhabditis elegans protein is Ubiquinone biosynthesis protein coq-4, mitochondrial.